Here is a 94-residue protein sequence, read N- to C-terminus: UPF0358 protein Bcer98_2651 (94 aa).

Belongs to the UPF0358 family.

In Bacillus cytotoxicus (strain DSM 22905 / CIP 110041 / 391-98 / NVH 391-98), this protein is UPF0358 protein Bcer98_2651.